Consider the following 443-residue polypeptide: Omega-6 fatty acid desaturase, chloroplastic (443 aa).

The transit peptide at 1–64 (MASRIADSLF…AKKRIGCIKA (64 aa)) directs the protein to the chloroplast. The Histidine box-1 motif lies at 166-170 (HDCAH). The short motif at 202-206 (HDRHH) is the Histidine box-2 element. The Histidine box-3 signature appears at 362–366 (HIPHH).

Belongs to the fatty acid desaturase type 1 family.

The protein localises to the plastid. It is found in the chloroplast membrane. The catalysed reaction is a (9Z)-octadecenoyl-containing glycerolipid + 2 reduced [2Fe-2S]-[ferredoxin] + O2 + 2 H(+) = a (9Z,12Z)-octadecadienoyl-containing glycerolipid + 2 oxidized [2Fe-2S]-[ferredoxin] + 2 H2O. It functions in the pathway lipid metabolism; polyunsaturated fatty acid biosynthesis. Chloroplast omega-6 fatty acid desaturase introduces the second double bond in the biosynthesis of 16:3 and 18:3 fatty acids, important constituents of plant membranes. It is thought to use ferredoxin as an electron donor and to act on fatty acids esterified to galactolipids, sulfolipids and phosphatidylglycerol. This is Omega-6 fatty acid desaturase, chloroplastic from Brassica napus (Rape).